A 205-amino-acid polypeptide reads, in one-letter code: Small heat shock protein hspG12 (205 aa).

One can recognise a sHSP domain in the interval 35–205 (KTIIDILPPM…YSNTIKININ (171 aa)). Positions 99-147 (PSLLDTKEDEASIEEFDEDDIKPKSTETTSTLSNSKENKKDENKSKSTE) are disordered. Residues 109–118 (ASIEEFDEDD) are compositionally biased toward acidic residues. Residues 134–147 (KENKKDENKSKSTE) are compositionally biased toward basic and acidic residues.

The protein belongs to the small heat shock protein (HSP20) family.

The chain is Small heat shock protein hspG12 (hspG12) from Dictyostelium discoideum (Social amoeba).